The primary structure comprises 807 residues: Glycerol-3-phosphate acyltransferase (807 aa).

The HXXXXD motif signature appears at 308-313; the sequence is CHRSHM.

This sequence belongs to the GPAT/DAPAT family.

It localises to the cell inner membrane. The catalysed reaction is sn-glycerol 3-phosphate + an acyl-CoA = a 1-acyl-sn-glycero-3-phosphate + CoA. The protein operates within phospholipid metabolism; CDP-diacylglycerol biosynthesis; CDP-diacylglycerol from sn-glycerol 3-phosphate: step 1/3. This chain is Glycerol-3-phosphate acyltransferase, found in Shewanella baltica (strain OS195).